The sequence spans 544 residues: WD repeat-containing protein 25 (544 aa).

Disordered regions lie at residues 17–74 (DSDS…EDPG) and 183–208 (QRQA…GRAP). Polar residues predominate over residues 30 to 39 (FNATGQQKDT). WD repeat units follow at residues 244 to 286 (GHRG…HCLQ), 290 to 329 (LHTE…QLFS), 330 to 373 (GRSD…RSYK), 375 to 420 (TIQQ…KISN), 424 to 463 (HERF…RMSR), 469 to 510 (GHKV…RACT), and 513 to 544 (GHTQ…KIWH).

Expressed in heart, muscle, testis, ovary, uterus and prostate.

The sequence is that of WD repeat-containing protein 25 from Homo sapiens (Human).